The chain runs to 1405 residues: DNA-directed RNA polymerase subunit beta' (1405 aa).

Cysteine 71, cysteine 73, cysteine 86, and cysteine 89 together coordinate Zn(2+). Residues aspartate 462, aspartate 464, and aspartate 466 each coordinate Mg(2+). Zn(2+)-binding residues include cysteine 820, cysteine 893, cysteine 900, and cysteine 903.

This sequence belongs to the RNA polymerase beta' chain family. The RNAP catalytic core consists of 2 alpha, 1 beta, 1 beta' and 1 omega subunit. When a sigma factor is associated with the core the holoenzyme is formed, which can initiate transcription. It depends on Mg(2+) as a cofactor. Requires Zn(2+) as cofactor.

It carries out the reaction RNA(n) + a ribonucleoside 5'-triphosphate = RNA(n+1) + diphosphate. In terms of biological role, DNA-dependent RNA polymerase catalyzes the transcription of DNA into RNA using the four ribonucleoside triphosphates as substrates. This is DNA-directed RNA polymerase subunit beta' from Methylorubrum extorquens (strain CM4 / NCIMB 13688) (Methylobacterium extorquens).